Consider the following 199-residue polypeptide: Prolactin (199 aa).

Cys4 and Cys11 are disulfide-bonded. Ser26 bears the Phosphoserine mark. Asn31 is a glycosylation site (N-linked (GlcNAc...) asparagine; partial). Ser34 and Ser90 each carry phosphoserine. 2 disulfide bridges follow: Cys58–Cys174 and Cys191–Cys199.

Belongs to the somatotropin/prolactin family. As to quaternary structure, interacts with PRLR.

The protein localises to the secreted. Its function is as follows. Prolactin acts primarily on the mammary gland by promoting lactation. The sequence is that of Prolactin (PRL) from Camelus dromedarius (Dromedary).